The following is a 415-amino-acid chain: Serine hydroxymethyltransferase (415 aa).

Residues Leu122 and 126 to 128 (GHL) each bind (6S)-5,6,7,8-tetrahydrofolate. At Lys230 the chain carries N6-(pyridoxal phosphate)lysine.

Belongs to the SHMT family. Homodimer. It depends on pyridoxal 5'-phosphate as a cofactor.

The protein resides in the cytoplasm. It carries out the reaction (6R)-5,10-methylene-5,6,7,8-tetrahydrofolate + glycine + H2O = (6S)-5,6,7,8-tetrahydrofolate + L-serine. It functions in the pathway one-carbon metabolism; tetrahydrofolate interconversion. The protein operates within amino-acid biosynthesis; glycine biosynthesis; glycine from L-serine: step 1/1. In terms of biological role, catalyzes the reversible interconversion of serine and glycine with tetrahydrofolate (THF) serving as the one-carbon carrier. This reaction serves as the major source of one-carbon groups required for the biosynthesis of purines, thymidylate, methionine, and other important biomolecules. Also exhibits THF-independent aldolase activity toward beta-hydroxyamino acids, producing glycine and aldehydes, via a retro-aldol mechanism. In Cupriavidus necator (strain ATCC 17699 / DSM 428 / KCTC 22496 / NCIMB 10442 / H16 / Stanier 337) (Ralstonia eutropha), this protein is Serine hydroxymethyltransferase.